The following is a 232-amino-acid chain: Large ribosomal subunit protein uL10c (232 aa).

A chloroplast-targeting transit peptide spans 1–52; sequence MESTLFLSKPLPTTIKTTTHSLSSVYPNPFKPNNLTFPRTTHKHPTTTTITA.

The protein belongs to the universal ribosomal protein uL10 family. Component of the chloroplast large ribosomal subunit (LSU). Mature 70S chloroplast ribosomes of higher plants consist of a small (30S) and a large (50S) subunit. The 30S small subunit contains 1 molecule of ribosomal RNA (16S rRNA) and 24 different proteins. The 50S large subunit contains 3 rRNA molecules (23S, 5S and 4.5S rRNA) and 33 different proteins.

It localises to the plastid. The protein resides in the chloroplast. Its function is as follows. Component of the chloroplast ribosome (chloro-ribosome), a dedicated translation machinery responsible for the synthesis of chloroplast genome-encoded proteins, including proteins of the transcription and translation machinery and components of the photosynthetic apparatus. This chain is Large ribosomal subunit protein uL10c (RPL10), found in Spinacia oleracea (Spinach).